The following is a 346-amino-acid chain: Histidinol-phosphate aminotransferase (346 aa).

At Lys-209 the chain carries N6-(pyridoxal phosphate)lysine.

Belongs to the class-II pyridoxal-phosphate-dependent aminotransferase family. Histidinol-phosphate aminotransferase subfamily. Homodimer. The cofactor is pyridoxal 5'-phosphate.

The catalysed reaction is L-histidinol phosphate + 2-oxoglutarate = 3-(imidazol-4-yl)-2-oxopropyl phosphate + L-glutamate. The protein operates within amino-acid biosynthesis; L-histidine biosynthesis; L-histidine from 5-phospho-alpha-D-ribose 1-diphosphate: step 7/9. This chain is Histidinol-phosphate aminotransferase, found in Vibrio cholerae serotype O1 (strain ATCC 39541 / Classical Ogawa 395 / O395).